Consider the following 168-residue polypeptide: Pathogenesis-related protein 1A (168 aa).

Residues Met-1 to Ala-30 form the signal peptide. The SCP domain maps to Leu-38–Tyr-156.

It belongs to the CRISP family. In terms of processing, three disulfide bonds are present.

It localises to the vacuole. In terms of biological role, probably involved in the defense reaction of plants against pathogens. This is Pathogenesis-related protein 1A from Nicotiana tabacum (Common tobacco).